The chain runs to 72 residues: UPF0154 protein EF_1734 (72 aa).

The chain crosses the membrane as a helical span at residues 4 to 26; that stretch reads GWVVLIAVIALLVGAAGGFFLAR.

It belongs to the UPF0154 family.

It is found in the membrane. This is UPF0154 protein EF_1734 from Enterococcus faecalis (strain ATCC 700802 / V583).